The chain runs to 147 residues: Hemoglobin subunit beta (147 aa).

The Globin domain occupies 3-147 (HWTAEEKQII…VAHALARKYH (145 aa)). Residues histidine 64 and histidine 93 each contribute to the heme b site.

As to quaternary structure, heterotetramer of two alpha (or alpha-D) and two beta chains. Red blood cells.

Involved in oxygen transport from the lung to the various peripheral tissues. The beta chain is a component of adult hemoglobin A and D. In Aythya fuligula (Tufted duck), this protein is Hemoglobin subunit beta.